Consider the following 61-residue polypeptide: Small ribosomal subunit protein uS14 (61 aa).

Zn(2+) is bound by residues Cys24, Cys27, Cys40, and Cys43.

This sequence belongs to the universal ribosomal protein uS14 family. Zinc-binding uS14 subfamily. Part of the 30S ribosomal subunit. Contacts proteins S3 and S10. Zn(2+) serves as cofactor.

Its function is as follows. Binds 16S rRNA, required for the assembly of 30S particles and may also be responsible for determining the conformation of the 16S rRNA at the A site. The protein is Small ribosomal subunit protein uS14 of Campylobacter jejuni subsp. jejuni serotype O:6 (strain 81116 / NCTC 11828).